Here is a 5762-residue protein sequence, read N- to C-terminus: Mucin-5B (5762 aa).

The signal sequence occupies residues 1–25; sequence MGAPSACRTLVLALAAMLVVPQAET. The interval 27–50 is disordered; that stretch reads GPVEPSWENAGHTMDGGAPTSSPT. In terms of domain architecture, VWFD 1 spans 75–245; the sequence is RVCSTWGDFH…KLDGPTEQCP (171 aa). Cystine bridges form between cysteine 77-cysteine 207 and cysteine 99-cysteine 244. An N-linked (GlcNAc...) asparagine glycan is attached at asparagine 145. Glutamate 194 is a Cu(2+) binding site. Residues asparagine 201 and asparagine 254 are each glycosylated (N-linked (GlcNAc...) asparagine). 2 residues coordinate Cu(2+): histidine 311 and histidine 358. Positions 329–385 constitute a TIL 1 domain; sequence CPLNMQHQECGSPCTDTCSNPQRAQLCEDHCVDGCFCPPGTVLDDITHSGCLPLGQC. Asparagine 401 carries N-linked (GlcNAc...) asparagine glycosylation. In terms of domain architecture, VWFD 2 spans 423 to 598; the sequence is GTCSVQGGAH…NTWKAQAACA (176 aa). Cystine bridges form between cysteine 425–cysteine 562, cysteine 447–cysteine 597, and cysteine 469–cysteine 477. Asparagine 515 carries an N-linked (GlcNAc...) asparagine glycan. TIL domains follow at residues 695-752 and 805-855; these read CPKS…AQEC and NSSA…EEDC. Asparagine 805 is a glycosylation site (N-linked (GlcNAc...) asparagine). Residues 855 to 927 enclose the VWFC 1 domain; sequence CPCVHNEATY…EYILAQDYCG (73 aa). In terms of domain architecture, VWFD 3 spans 893-1062; that stretch reads GTCVAYGDGH…NSWKLSPSCP (170 aa). Disulfide bonds link cysteine 895–cysteine 1026, cysteine 917–cysteine 1061, cysteine 926–cysteine 1023, and cysteine 944–cysteine 951. A glycan (N-linked (GlcNAc...) asparagine) is linked at asparagine 929. Asparagine 1276 and asparagine 1292 each carry an N-linked (GlcNAc...) asparagine glycan. Residues 1333-1432 form a Cys-rich subdomain 1 repeat; the sequence is CVREVCRWSS…RVLCCEYVPC (100 aa). The segment at 1333–4228 is 7 X Cys-rich subdomain repeats; that stretch reads CVREVCRWSS…RVFCCNYGHC (2896 aa). Tryptophan 1340 carries C-linked (Man) tryptophan glycosylation. 2 disordered regions span residues 1437 to 1462 and 1480 to 1502; these read APGT…QTTA and LTSQ…GTTT. The span at 1450-1462 shows a compositional bias: low complexity; sequence TEPAVPTPTQTTA. The stretch at 1503–1604 is one Cys-rich subdomain 2 repeat; sequence CQPRCQWTEW…VLCCSDDHCR (102 aa). The C-linked (Man) tryptophan glycan is linked to tryptophan 1509. Residue asparagine 1556 is glycosylated (N-linked (GlcNAc...) asparagine). Positions 1607 to 1783 are disordered; that stretch reads ATTPPPTTEL…NTTTSQGTTR (177 aa). Residues 1614-1624 show a composition bias toward low complexity; it reads TELETATTTTT. Composition is skewed to polar residues over residues 1625-1638 and 1645-1662; these read QALF…SSPG and ASTT…SPRY. Residues 1663-1684 are compositionally biased toward low complexity; it reads TSTLGTATTGGPTTPAGSTEPT. Over residues 1689–1706 the composition is skewed to polar residues; the sequence is ATSTLPTRSALPGTTGSL. 2 stretches are compositionally biased toward low complexity: residues 1739–1756 and 1765–1777; these read EPLT…LSTS and TETT…NTTT. N-linked (GlcNAc...) asparagine glycosylation occurs at asparagine 1774. One copy of the Cys-rich subdomain 3 repeat lies at 1784–1885; it reads CQPKCEWTEW…VLCCDDYSHC (102 aa). Residue tryptophan 1790 is glycosylated (C-linked (Man) tryptophan). Over residues 1890–1987 the composition is skewed to low complexity; sequence ATSSTATPSS…TSVTPIPSSS (98 aa). Disordered stretches follow at residues 1890–2019, 2031–2100, 2114–2211, and 2242–2302; these read ATSS…TAHT, GATG…GTTH, TGSM…HTVR, and TGTT…SSPT. The 11 X approximate tandem repeats, Ser/Thr-rich stretch occupies residues 1890 to 2199; that stretch reads ATSSTATPSS…VPNTMATTHG (310 aa). The segment covering 1988 to 1997 has biased composition (polar residues); that stretch reads LGTTWTRLSQ. Residues 1998 to 2019 are compositionally biased toward low complexity; it reads TTTPTATMSTATPSSTPETAHT. Low complexity predominate over residues 2114-2181; it reads TGSMATPSSS…TSNTVTPSSA (68 aa). Over residues 2182 to 2199 the composition is skewed to polar residues; the sequence is LGTTHTPPVPNTMATTHG. Residues 2313-2414 form a Cys-rich subdomain 4 repeat; it reads GCEPQCAWSE…RVFCCNYGHC (102 aa). Tryptophan 2320 carries a C-linked (Man) tryptophan glycan. The tract at residues 2419–2756 is 11 X approximate tandem repeats, Ser/Thr-rich; sequence ATSSTAMPSS…VPNTTATTHG (338 aa). 3 disordered regions span residues 2443 to 2462, 2473 to 2522, and 2556 to 2861; these read ATTT…PGTT, TVTV…ATAL, and TTPT…PTSA. Over residues 2556-2738 the composition is skewed to low complexity; that stretch reads TTPTATMSTA…TSSTVTPSSA (183 aa). Residues 2739–2786 show a composition bias toward polar residues; sequence LGTTHTPPVPNTTATTHGRSLSPSSPHTVRTAWTSATSGTLGTTHITE. Asparagine 2749 is a glycosylation site (N-linked (GlcNAc...) asparagine). Residues 2787 to 2861 are compositionally biased toward low complexity; the sequence is PSTGTSHTPA…TLLPSSPTSA (75 aa). Residues 2854 to 2886 form an HAT 1 repeat; it reads LPSSPTSAPITTVVTMGCEPQCAWSEWLDYSYP. A Cys-rich subdomain 5 repeat occupies 2871–2971; sequence CEPQCAWSEW…RVFCCNYGHC (101 aa). Tryptophan 2877 carries C-linked (Man) tryptophan glycosylation. Residues 2976-3456 form a 17 X approximate tandem repeats, Ser/Thr-rich region; the sequence is ATSSTATPSS…VPNTTATTHG (481 aa). Low complexity-rich tracts occupy residues 3001-3017 and 3026-3049; these read TTTA…STPG and TSTA…RTAT. Disordered stretches follow at residues 3001-3049, 3256-3357, 3371-3469, and 3481-3561; these read TTTA…RTAT, TTPT…GTTH, TGSM…TVRT, and TTHI…PTSA. Over residues 3371-3438 the composition is skewed to low complexity; the sequence is TGSMATPSSS…TSSTVTPSSA (68 aa). The segment covering 3439-3456 has biased composition (polar residues); it reads LGTTHTPPVPNTTATTHG. Residue asparagine 3449 is glycosylated (N-linked (GlcNAc...) asparagine). Positions 3487–3561 are enriched in low complexity; the sequence is PSTVTSHTPA…TLLPSSPTSA (75 aa). Residues 3554 to 3586 form an HAT 2 repeat; that stretch reads LPSSPTSAPITTVVTTGCEPQCAWSEWLDYSYP. The stretch at 3571 to 3671 is one Cys-rich subdomain 6 repeat; that stretch reads CEPQCAWSEW…RVFCCNYGHC (101 aa). A C-linked (Man) tryptophan glycan is attached at tryptophan 3577. The segment at 3676 to 4013 is 11 X approximate tandem repeats, Ser/Thr-rich; the sequence is ATSSTATPSS…VPNTTATTHG (338 aa). Disordered stretches follow at residues 3699-3779, 3813-3917, and 3956-4118; these read TATT…ATAL, TTPT…HTPT, and ATGS…PTSA. Residues 3956–3995 are compositionally biased toward low complexity; the sequence is ATGSTTNPSSTPGTTPIPPVLTTTATTPAATSSTVTPSSA. Over residues 3996-4043 the composition is skewed to polar residues; sequence LGTTHTPPVPNTTATTHGRSLSPSSPHTVRTAWTSATSGTLGTTHITE. An N-linked (GlcNAc...) asparagine glycan is attached at asparagine 4006. The segment covering 4044 to 4118 has biased composition (low complexity); it reads PSTGTSHTPA…TLLPSSPTSA (75 aa). The HAT 3 repeat unit spans residues 4111-4143; that stretch reads LPSSPTSAPITTVVTTGCEPQCAWSEWLDYSYP. One copy of the Cys-rich subdomain 7 repeat lies at 4128 to 4228; that stretch reads CEPQCAWSEW…RVFCCNYGHC (101 aa). C-linked (Man) tryptophan glycosylation is present at tryptophan 4134. Residues 4233–4879 are 23 X approximate tandem repeats, Ser/Thr-rich; the sequence is ATSSTAMPSS…TLGTAHTPKV (647 aa). Low complexity-rich tracts occupy residues 4259 to 4274 and 4283 to 4389; these read TTAS…STPG and TSPA…PGTT. Disordered regions lie at residues 4259-4389, 4428-4447, 4458-4527, and 4541-4750; these read TTAS…PGTT, ATTT…PGTT, TVTV…AIPS, and TTPT…ATSF. Residues asparagine 4804, asparagine 4960, asparagine 5017, asparagine 5024, asparagine 5046, asparagine 5096, and asparagine 5111 are each glycosylated (N-linked (GlcNAc...) asparagine). Residues 5073 to 5261 enclose the VWFD 4 domain; that stretch reads CICSMWGGSH…VPDSRKDGCW (189 aa). 3 disulfides stabilise this stretch: cysteine 5075/cysteine 5221, cysteine 5097/cysteine 5260, and cysteine 5121/cysteine 5132. A glycan (N-linked (GlcNAc...) asparagine) is linked at asparagine 5215. Residues 5412–5484 enclose the VWFC 2 domain; sequence CPCVGPDGFP…NPCCPETVCV (73 aa). Asparagine 5486, asparagine 5526, asparagine 5565, asparagine 5566, asparagine 5602, asparagine 5612, asparagine 5663, asparagine 5677, and asparagine 5721 each carry an N-linked (GlcNAc...) asparagine glycan. The region spanning 5521–5587 is the VWFC 3 domain; it reads QLCSYNGTFY…VAGQCCGECV (67 aa). Intrachain disulfides connect cysteine 5653-cysteine 5705, cysteine 5672-cysteine 5719, cysteine 5681-cysteine 5735, and cysteine 5685-cysteine 5737. The 90-residue stretch at 5653–5742 folds into the CTCK domain; the sequence is CEEDSCQVRI…DECGCTPFCV (90 aa).

As to quaternary structure, homomultimer; disulfide-linked. The N- and C-terminus mediate their assembly into higher order structures to form filaments. The CTCK domains of two polypeptides associate in the endoplasmic reticulum to generate intermolecularly disulfide-bonded dimers. These dimers progress to the Golgi apparatus, which is a more acidic environment than the endoplasmic reticulum. Under acidic conditions, the N-termini form non-covalent intermolecular interactions that juxtapose assemblies from different CTCK-linked dimers to produce long, disulfide-linked polymers that remain highly compact until secretion. Highly glycosylated. C-, N- and O-glycosylated. C-mannosylated in the Cys-rich subdomains probably on the first Trp residue of the WXXW motif. Highly O-glycosylated in the Ser/Thr-rich tandem repeat (TR) region. The repeat region is about 59% O-glycosylated with a high abundance of NeuAc(2)Hex(1)HexNac1-ol. As to expression, expressed on surface airway epithelia. Expressed mainly in mucous cells of submucosal glands of airway tissues. Highly expressed in the sublingual gland. Also found in submaxillary glands, endocervix, gall bladder, and pancreas.

The protein localises to the secreted. In terms of biological role, gel-forming mucin that is thought to contribute to the lubricating and viscoelastic properties of whole saliva and cervical mucus. This is Mucin-5B (MUC5B) from Homo sapiens (Human).